The chain runs to 339 residues: Anthranilate phosphoribosyltransferase (339 aa).

5-phospho-alpha-D-ribose 1-diphosphate-binding positions include glycine 79, 82–83, serine 87, 89–92, 107–115, and serine 119; these read GD, NIST, and KHGNRSISS. Glycine 79 contributes to the anthranilate binding site. A Mg(2+)-binding site is contributed by serine 91. Asparagine 110 is an anthranilate binding site. Residue arginine 165 coordinates anthranilate. Aspartate 224 and glutamate 225 together coordinate Mg(2+).

The protein belongs to the anthranilate phosphoribosyltransferase family. In terms of assembly, homodimer. Mg(2+) serves as cofactor.

It catalyses the reaction N-(5-phospho-beta-D-ribosyl)anthranilate + diphosphate = 5-phospho-alpha-D-ribose 1-diphosphate + anthranilate. Its pathway is amino-acid biosynthesis; L-tryptophan biosynthesis; L-tryptophan from chorismate: step 2/5. Its function is as follows. Catalyzes the transfer of the phosphoribosyl group of 5-phosphorylribose-1-pyrophosphate (PRPP) to anthranilate to yield N-(5'-phosphoribosyl)-anthranilate (PRA). In Listeria welshimeri serovar 6b (strain ATCC 35897 / DSM 20650 / CCUG 15529 / CIP 8149 / NCTC 11857 / SLCC 5334 / V8), this protein is Anthranilate phosphoribosyltransferase.